Here is a 348-residue protein sequence, read N- to C-terminus: F-box protein At2g20380 (348 aa).

Residues 14-60 (SPESNSLPNDLIVTILARLSQSYYPKLSLVSKTFRAILASPELYQTR) enclose the F-box domain.

This Arabidopsis thaliana (Mouse-ear cress) protein is F-box protein At2g20380.